The sequence spans 303 residues: Protoheme IX farnesyltransferase (303 aa).

The next 6 membrane-spanning stretches (helical) occupy residues 25–45 (MGLVQGNLIPAFAGAWLAIVM), 54–74 (IPQILLMLVGSTLIMGGACAL), 118–138 (CLFLLNIPSGVLGLIGIVGYV), 166–186 (IGWVAIDGSLSLAAVALFLVV), 230–250 (LVLLLPLPFLLSNLGVTFVVI), and 280–300 (FVYSLNYLVVFFALVVVVSLI).

The protein belongs to the UbiA prenyltransferase family. Protoheme IX farnesyltransferase subfamily. Interacts with CtaA.

The protein localises to the cell membrane. The catalysed reaction is heme b + (2E,6E)-farnesyl diphosphate + H2O = Fe(II)-heme o + diphosphate. Its pathway is porphyrin-containing compound metabolism; heme O biosynthesis; heme O from protoheme: step 1/1. Functionally, converts heme B (protoheme IX) to heme O by substitution of the vinyl group on carbon 2 of heme B porphyrin ring with a hydroxyethyl farnesyl side group. This chain is Protoheme IX farnesyltransferase, found in Staphylococcus epidermidis (strain ATCC 12228 / FDA PCI 1200).